The primary structure comprises 364 residues: Glycerophosphodiester phosphodiesterase (364 aa).

An N-terminal signal peptide occupies residues 1 to 18; it reads MKLKTLALSLLAAGVLAG. Residue Cys-19 is the site of N-palmitoyl cysteine attachment. Cys-19 carries the S-diacylglycerol cysteine lipid modification. The GP-PDE domain maps to 35–360; the sequence is KIIIAHRGAS…DFPDTGVEFL (326 aa). His-40 functions as the Proton acceptor in the catalytic mechanism. Ca(2+) is bound by residues Glu-67 and Asp-69. The Proton donor role is filled by His-82. Glu-175 lines the Ca(2+) pocket.

It belongs to the glycerophosphoryl diester phosphodiesterase family. Ca(2+) is required as a cofactor. Contains both ester- and amide-linked fatty acids.

It localises to the cell outer membrane. It catalyses the reaction a sn-glycero-3-phosphodiester + H2O = an alcohol + sn-glycerol 3-phosphate + H(+). Its function is as follows. Glycerophosphodiester phosphodiesterase hydrolyzes glycerophosphodiesters into glycerol-3-phosphate (G3P) and the corresponding alcohol. Has a specific affinity for human immunoglobulin D myeloma protein. This chain is Glycerophosphodiester phosphodiesterase (glpQ), found in Haemophilus influenzae (strain ATCC 51907 / DSM 11121 / KW20 / Rd).